Consider the following 288-residue polypeptide: Shikimate dehydrogenase (NADP(+)) (288 aa).

Residues 15-17 and T64 contribute to the shikimate site; that span reads SKS. K68 acts as the Proton acceptor in catalysis. E83 is a binding site for NADP(+). N92 and D117 together coordinate shikimate. Residues 141–145, 165–170, and M232 each bind NADP(+); these read GAGGA and NRTLSK. Residue Y234 participates in shikimate binding. G254 contributes to the NADP(+) binding site.

This sequence belongs to the shikimate dehydrogenase family. As to quaternary structure, homodimer.

It carries out the reaction shikimate + NADP(+) = 3-dehydroshikimate + NADPH + H(+). The protein operates within metabolic intermediate biosynthesis; chorismate biosynthesis; chorismate from D-erythrose 4-phosphate and phosphoenolpyruvate: step 4/7. Functionally, involved in the biosynthesis of the chorismate, which leads to the biosynthesis of aromatic amino acids. Catalyzes the reversible NADPH linked reduction of 3-dehydroshikimate (DHSA) to yield shikimate (SA). The polypeptide is Shikimate dehydrogenase (NADP(+)) (Psychrobacter arcticus (strain DSM 17307 / VKM B-2377 / 273-4)).